A 187-amino-acid polypeptide reads, in one-letter code: Large ribosomal subunit protein uL13 (187 aa).

Belongs to the universal ribosomal protein uL13 family.

The protein is Large ribosomal subunit protein uL13 (rpl13a) of Dictyostelium discoideum (Social amoeba).